The primary structure comprises 330 residues: Phenylalanine--tRNA ligase alpha subunit (330 aa).

Residue glutamate 246 coordinates Mg(2+).

This sequence belongs to the class-II aminoacyl-tRNA synthetase family. Phe-tRNA synthetase alpha subunit type 1 subfamily. In terms of assembly, tetramer of two alpha and two beta subunits. Mg(2+) serves as cofactor.

Its subcellular location is the cytoplasm. It carries out the reaction tRNA(Phe) + L-phenylalanine + ATP = L-phenylalanyl-tRNA(Phe) + AMP + diphosphate + H(+). In Campylobacter jejuni subsp. jejuni serotype O:6 (strain 81116 / NCTC 11828), this protein is Phenylalanine--tRNA ligase alpha subunit.